The sequence spans 237 residues: Large ribosomal subunit protein uL3 (237 aa).

2 disordered regions span residues 133–155 (ASHGNSITHRSHGSTGQRQDPGK) and 213–237 (PENAPKPAGLRAGAKAEAAATEGAE). Residues 135–150 (HGNSITHRSHGSTGQR) show a composition bias toward polar residues. Gln-151 is subject to N5-methylglutamine. Low complexity predominate over residues 220–237 (AGLRAGAKAEAAATEGAE).

The protein belongs to the universal ribosomal protein uL3 family. In terms of assembly, part of the 50S ribosomal subunit. Forms a cluster with proteins L14 and L19. Methylated by PrmB.

Its function is as follows. One of the primary rRNA binding proteins, it binds directly near the 3'-end of the 23S rRNA, where it nucleates assembly of the 50S subunit. The chain is Large ribosomal subunit protein uL3 from Brucella canis (strain ATCC 23365 / NCTC 10854 / RM-666).